We begin with the raw amino-acid sequence, 82 residues long: UPF0213 protein SERP0126 (82 aa).

Positions 2–77 constitute a GIY-YIG domain; that stretch reads DKHFVYIVKC…KTYTRQQKLK (76 aa).

The protein belongs to the UPF0213 family.

The protein is UPF0213 protein SERP0126 of Staphylococcus epidermidis (strain ATCC 35984 / DSM 28319 / BCRC 17069 / CCUG 31568 / BM 3577 / RP62A).